We begin with the raw amino-acid sequence, 210 residues long: Probable GTP-binding protein EngB (210 aa).

An EngB-type G domain is found at 25 to 199 (TGIEVAFAGR…RQKLDTWFSE (175 aa)). Residues 33–40 (GRSNAGKS), 60–64 (GRTQL), 78–81 (DLPG), 145–148 (TKAD), and 178–180 (FSS) contribute to the GTP site. Serine 40 and threonine 62 together coordinate Mg(2+).

It belongs to the TRAFAC class TrmE-Era-EngA-EngB-Septin-like GTPase superfamily. EngB GTPase family. The cofactor is Mg(2+).

In terms of biological role, necessary for normal cell division and for the maintenance of normal septation. The protein is Probable GTP-binding protein EngB of Shigella flexneri.